The primary structure comprises 189 residues: dCTP deaminase (189 aa).

DCTP-binding positions include 112 to 117 (KSTYAR), 136 to 138 (TLE), Gln157, Tyr171, and Gln181. The active-site Proton donor/acceptor is Glu138.

It belongs to the dCTP deaminase family. In terms of assembly, homotrimer.

It carries out the reaction dCTP + H2O + H(+) = dUTP + NH4(+). It functions in the pathway pyrimidine metabolism; dUMP biosynthesis; dUMP from dCTP (dUTP route): step 1/2. Catalyzes the deamination of dCTP to dUTP. This Halorhodospira halophila (strain DSM 244 / SL1) (Ectothiorhodospira halophila (strain DSM 244 / SL1)) protein is dCTP deaminase.